A 466-amino-acid chain; its full sequence is Argininosuccinate lyase (466 aa).

The protein belongs to the lyase 1 family. Argininosuccinate lyase subfamily.

It localises to the cytoplasm. The enzyme catalyses 2-(N(omega)-L-arginino)succinate = fumarate + L-arginine. The protein operates within amino-acid biosynthesis; L-arginine biosynthesis; L-arginine from L-ornithine and carbamoyl phosphate: step 3/3. This chain is Argininosuccinate lyase, found in Brucella abortus (strain S19).